We begin with the raw amino-acid sequence, 1372 residues long: MGQLTKKFGKIPVSLGIPHLLNLQVDSYVKFLQEGLAERKTDEGLEGVFRSVFPIEDFNRTASLEYVSYDIGEPKFDQAECISKGLTYEAPIRIKVRLVVYDVDDDSGNRTIRDIKEQDIYFGTLPLMTEKGTFIINGTERVIVNQLQRSPGIIFEHDSGKTHSSRKVLYSCRVIPMRGSWLDFDFDHKDILYVRIDRRRKMPATILFKAMGMTKTDILDYFYKKEFYRISADGRVFWEVQKDMFRKDSAFADIAGPDGTVFVKAGKPITKRAWRQICEAGLETIEVAADTLDGLFLADDVVNPATGEVLAEAADEVTPGVQERLREAGIDRLPILHTKGIDTSSSLRDTLVLDKTADKEAAQVEIYRRLRPSSPPTPEIAESFFDNLFRSADYYDLSPVGRYKLNQRLGLDQSLELRVLTDEDILTAIRVLLHLKDSHGPADDIDHLGNRRVRPVGELVENQYRIGLVRMERAIKERMSLQEVSTLMPHDLINPKPVAAVLKEFFGTSQLSQFMDQTNALSEVTHKRRLSALGPGGLTRERAGFEVRDVHTSHYGRICPIETPEGPNIGLIVSLTTYAKVNDYGFIETPYHVIRDTKMTGEVVYLDASREHGEVIAQANAPFDAEGKLADEYVTTRVKGDVLMSPREEVTLMDVSPSQMVSISAALIPFLEHDDANRALMGSNMQRQAVPLLQCEKPLVGTGMEGPVAQDSGACIIAEGPGIVRYADADRIIVSYENGLYPERGGVRAYDLQKFHKSNQNSCFGQKPTCHPGQIVAKGDILADGPGIEDGELALGKNLVVAFMPWCGYNFEDSILISERTVKEDTFTSVHIEEFEVVARDTKLGPEEITRDIPNVGEDMLRNLDGSGIIRIGANVKPDDILVGKITPKGETQLTPEEKLLRAIFGDKARDVKNTSLKVPPGIEGTVIEVKVFNRRSGEKDERARLIEEYELGRLDRKEQDHIRGLGDATRVKLMAVVEGKQIATTLAGKKKGEVIAEAGASVTAEMLADVPLKKLSGLFKNREVNEAVDALLESYDQQVQFISNIYESKRGKVTEGDDLPPGVIKMVKVYIAVKRKLSVGDKMAGRHGNKGVVSCILPAEDMPFFADGRPVDIVLNPLGVPSRMNIGQIMETHLGWAAKEMGRQLAEMLERNDPLKALRNEVKRAFDSPAIDSLVDSMDDEDFRASVAKLGRGIVTKTPVFDGAAEEEIWSWLVRANIDEDGKTVLYDGRTGERFHNRVTTGVMYMLKLHHLVDEKIHARSTGPYSLVTQQPLGGKAQFGGQRLGEMEVWALEAYGAAYLLQEFLTVKSDDVTGRVKMYEKIVKGDNFLEAGLPESFNVLVKELMSLGLDVTLHQEEGKKRPKRVGFMNAL.

Belongs to the RNA polymerase beta chain family. As to quaternary structure, the RNAP catalytic core consists of 2 alpha, 1 beta, 1 beta' and 1 omega subunit. When a sigma factor is associated with the core the holoenzyme is formed, which can initiate transcription.

It catalyses the reaction RNA(n) + a ribonucleoside 5'-triphosphate = RNA(n+1) + diphosphate. DNA-dependent RNA polymerase catalyzes the transcription of DNA into RNA using the four ribonucleoside triphosphates as substrates. In Nitratidesulfovibrio vulgaris (strain DSM 19637 / Miyazaki F) (Desulfovibrio vulgaris), this protein is DNA-directed RNA polymerase subunit beta.